The primary structure comprises 128 residues: Large ribosomal subunit protein bL17 (128 aa).

This sequence belongs to the bacterial ribosomal protein bL17 family. In terms of assembly, part of the 50S ribosomal subunit. Contacts protein L32.

This Tolumonas auensis (strain DSM 9187 / NBRC 110442 / TA 4) protein is Large ribosomal subunit protein bL17.